A 146-amino-acid chain; its full sequence is Probable calcium-binding protein CML32 (146 aa).

EF-hand domains are found at residues 1–33, 34–69, 73–108, and 109–144; these read MSVA…FSPS, ITSE…GGEG, DEDI…LGEK, and QTIA…NNKK. Ca(2+)-binding residues include Asp-11, Asn-13, Asp-15, Lys-17, Glu-22, Asp-47, Asp-49, Asp-51, Gln-53, Glu-58, Asp-86, Asp-88, Asp-90, Lys-92, Glu-97, Asp-122, Asp-124, Asp-126, and Glu-133.

Its function is as follows. Potential calcium sensor. This chain is Probable calcium-binding protein CML32 (CML32), found in Arabidopsis thaliana (Mouse-ear cress).